Here is a 423-residue protein sequence, read N- to C-terminus: Histidine--tRNA ligase (423 aa).

This sequence belongs to the class-II aminoacyl-tRNA synthetase family. Homodimer.

The protein localises to the cytoplasm. The enzyme catalyses tRNA(His) + L-histidine + ATP = L-histidyl-tRNA(His) + AMP + diphosphate + H(+). The chain is Histidine--tRNA ligase from Geobacillus sp. (strain WCH70).